Reading from the N-terminus, the 212-residue chain is Octanoyltransferase (212 aa).

Residues 31 to 209 (AETQDEIWLV…HFANLLGYNI (179 aa)) form the BPL/LPL catalytic domain. Substrate is bound by residues 70-77 (RGGQITYH), 138-140 (SLG), and 151-153 (GLA). Cysteine 169 serves as the catalytic Acyl-thioester intermediate.

It belongs to the LipB family.

The protein resides in the cytoplasm. The catalysed reaction is octanoyl-[ACP] + L-lysyl-[protein] = N(6)-octanoyl-L-lysyl-[protein] + holo-[ACP] + H(+). It functions in the pathway protein modification; protein lipoylation via endogenous pathway; protein N(6)-(lipoyl)lysine from octanoyl-[acyl-carrier-protein]: step 1/2. In terms of biological role, catalyzes the transfer of endogenously produced octanoic acid from octanoyl-acyl-carrier-protein onto the lipoyl domains of lipoate-dependent enzymes. Lipoyl-ACP can also act as a substrate although octanoyl-ACP is likely to be the physiological substrate. The chain is Octanoyltransferase from Haemophilus influenzae (strain ATCC 51907 / DSM 11121 / KW20 / Rd).